A 185-amino-acid polypeptide reads, in one-letter code: Fimbrial subunit type 1 (185 aa).

A signal peptide spans 1 to 22 (MRHKLMTSTIASLMFVAAAAVA). Cysteines 46 and 86 form a disulfide.

The protein belongs to the fimbrial protein family.

The protein localises to the fimbrium. The protein is Fimbrial subunit type 1 of Salmonella typhimurium.